The chain runs to 100 residues: Integration host factor subunit alpha (100 aa).

Belongs to the bacterial histone-like protein family. In terms of assembly, heterodimer of an alpha and a beta chain.

This protein is one of the two subunits of integration host factor, a specific DNA-binding protein that functions in genetic recombination as well as in transcriptional and translational control. This is Integration host factor subunit alpha from Jannaschia sp. (strain CCS1).